We begin with the raw amino-acid sequence, 802 residues long: Sucrose synthase 1 (802 aa).

A GT-B glycosyltransferase region spans residues Met272–Thr749.

The protein belongs to the glycosyltransferase 1 family. Plant sucrose synthase subfamily.

The catalysed reaction is an NDP-alpha-D-glucose + D-fructose = a ribonucleoside 5'-diphosphate + sucrose + H(+). In terms of biological role, sucrose-cleaving enzyme that provides UDP-glucose and fructose for various metabolic pathways. Most active in the sink tissues where it is responsible for the breakdown of the arriving sucrose. The chain is Sucrose synthase 1 (SH-1) from Zea mays (Maize).